The primary structure comprises 442 residues: O-acetyl-L-homoserine sulfhydrylase (442 aa).

Residues 1 to 32 (MVGPSGESMPRNFKPETIALHGGQEPDPTTTS) form a disordered region. At K216 the chain carries N6-(pyridoxal phosphate)lysine.

This sequence belongs to the trans-sulfuration enzymes family. Pyridoxal 5'-phosphate is required as a cofactor.

The catalysed reaction is O-acetyl-L-homoserine + hydrogen sulfide = L-homocysteine + acetate. It participates in amino-acid biosynthesis; L-methionine biosynthesis via de novo pathway; L-homocysteine from O-acetyl-L-homoserine: step 1/1. Its activity is regulated as follows. Feedback inhibited at very high concentrations of methionine or S-adenosylmethionine. Catalyzes the conversion of O-acetyl-L-homoserine (OAH) into homocysteine in the methionine biosynthesis pathway. Can also use O-succinyl-homoserine (OSH), although at low efficiency. The chain is O-acetyl-L-homoserine sulfhydrylase from Leptospira meyeri.